Consider the following 380-residue polypeptide: Protein Wnt-5a (380 aa).

Positions 1-35 (MKKSIGILSPGVALGMAGSAMSSKFFLVALAIFFS) are cleaved as a signal peptide. A propeptide spanning residues 36-61 (FAQVVIEANSWWSLGMNNPVQMSEVY) is cleaved from the precursor. The cysteines at positions 104 and 115 are disulfide-linked. N114 and N120 each carry an N-linked (GlcNAc...) asparagine glycan. 10 disulfide bridges follow: C154–C162, C164–C182, C238–C252, C240–C247, C309–C340, C325–C335, C339–C379, C355–C370, C357–C367, and C362–C363. Residue S244 is the site of O-palmitoleoyl serine; by PORCN attachment. N-linked (GlcNAc...) asparagine glycosylation is found at N312 and N326.

It belongs to the Wnt family. In terms of assembly, forms a soluble 1:1 complex with AFM; this prevents oligomerization and is required for prolonged biological activity. The complex with AFM may represent the physiological form in body fluids. Homooligomer; disulfide-linked, leading to inactivation (in vitro). Interacts with PORCN. Interacts with WLS. Interacts with glypican GCP3. Interacts with PKD1 (via extracellular domain). Interacts with TMEM67. In terms of processing, glycosylation is necessary for secretion but not for activity. Post-translationally, palmitoleoylation is required for efficient binding to frizzled receptors. Depalmitoleoylation leads to Wnt signaling pathway inhibition. Proteolytic processing by TIKI1 and TIKI2 promotes oxidation and formation of large disulfide-bond oligomers, leading to inactivation of WNT5A. Expression is increased in differentiated thyroid carcinomas compared to normal thyroid tissue and anaplastic thyroid tumors where expression is low or undetectable. Expression is found in thyrocytes but not in stromal cells (at protein level). Detected in neonate heart and lung.

Its subcellular location is the secreted. The protein localises to the extracellular space. It is found in the extracellular matrix. Functionally, ligand for members of the frizzled family of seven transmembrane receptors. Can activate or inhibit canonical Wnt signaling, depending on receptor context. In the presence of FZD4, activates beta-catenin signaling. In the presence of ROR2, inhibits the canonical Wnt pathway by promoting beta-catenin degradation through a GSK3-independent pathway which involves down-regulation of beta-catenin-induced reporter gene expression. Suppression of the canonical pathway allows chondrogenesis to occur and inhibits tumor formation. Stimulates cell migration. Decreases proliferation, migration, invasiveness and clonogenicity of carcinoma cells and may act as a tumor suppressor. Mediates motility of melanoma cells. Required during embryogenesis for extension of the primary anterior-posterior axis and for outgrowth of limbs and the genital tubercle. Inhibits type II collagen expression in chondrocytes. This chain is Protein Wnt-5a (WNT5A), found in Homo sapiens (Human).